Reading from the N-terminus, the 867-residue chain is Prominin-1 (867 aa).

The N-terminal stretch at 1-19 (MALVFSALLLLGLCGKISS) is a signal peptide. The Extracellular segment spans residues 20 to 107 (EGQPAFHNTP…VLALKIALYE (88 aa)). The helical transmembrane segment at 108–128 (IGVLICAILGLLFIILMPLVG) threads the bilayer. At 129–158 (CFFCMCRCCNKCGGEMHQRQKQNAPCRRKC) the chain is on the cytoplasmic side. The helical transmembrane segment at 159-179 (LGLSLLVICLLMSLGIIYGFV) threads the bilayer. Residues 180–434 (ANQQTRTRIK…LPKLEEYDSY (255 aa)) lie on the Extracellular side of the membrane. N6-acetyllysine is present on residues K226, K258, and K265. N273, N291, N332, N374, and N415 each carry an N-linked (GlcNAc...) asparagine glycan. The chain crosses the membrane as a helical span at residues 435-455 (WWLGGLIVCFLLTLIVTFFFL). The Cytoplasmic segment spans residues 456–487 (GLLCGVFGYDKHATPTRRGCVSNTGGIFLMAG). Residues 488–508 (VGFGFLFCWILMILVVLTFVV) traverse the membrane as a helical segment. Topologically, residues 509-794 (GANVEKLLCE…LCGYVADPLN (286 aa)) are extracellular. N554, N581, and N732 each carry an N-linked (GlcNAc...) asparagine glycan. Residues 795–815 (LFWFGIGKATVLLLPAVIIAI) traverse the membrane as a helical segment. Topologically, residues 816-867 (KLAKYYRRMDSEDVYDDVETVPMKNLEIGSNGYHKDHLYGVHNPVMTSPSRY) are cytoplasmic. A Phosphoserine modification is found at S865.

The protein belongs to the prominin family. In terms of assembly, interacts with CDHR1 and with actin filaments. Interacts with NAT8 and NAT8B. Post-translationally, acetylation at Lys-226, Lys-258 and Lys-265 by NAT8 and NAT8B may control PROM1 protein expression and its function in cell apoptosis. As to expression, in the submandibular gland, expressed on the apical side of epithelial cells. In the parotid gland, expressed in the intercalated ducts. In the sublingual gland, expressed in intercalated ducts. In the extraorbital lacrimal gland, expressed in the intercalated tubules and larger intralobular ducts. Expressed in the retina. Present in urine within small membrane particles (at protein level). In the embryo, expressed on the apical side of neuroepithelial cells and of other epithelia such as lung buds, gut and ureter buds. In the adult, expressed at the apical side of the kidney tubules and of the ependymal layer of the brain. Not expressed in gut, liver, lung, pituitary, adrenal, heart or spleen. Localized to the nascent disk membranes at the base of the rod outer segment in the retina (at protein level).

Its subcellular location is the apical cell membrane. The protein resides in the cell projection. The protein localises to the microvillus membrane. It is found in the cilium. It localises to the photoreceptor outer segment. Its subcellular location is the endoplasmic reticulum. The protein resides in the endoplasmic reticulum-Golgi intermediate compartment. In terms of biological role, may play a role in cell differentiation, proliferation and apoptosis. Binds cholesterol in cholesterol-containing plasma membrane microdomains and may play a role in the organization of the apical plasma membrane in epithelial cells. During early retinal development acts as a key regulator of disk morphogenesis. Involved in regulation of MAPK and Akt signaling pathways. In neuroblastoma cells suppresses cell differentiation such as neurite outgrowth in a RET-dependent manner. The sequence is that of Prominin-1 (Prom1) from Mus musculus (Mouse).